Reading from the N-terminus, the 102-residue chain is NADH-quinone oxidoreductase subunit K (102 aa).

Transmembrane regions (helical) follow at residues 6–26 (LEHG…GLMV), 30–50 (ILFV…AFIV), and 62–82 (VMFI…LAIL).

Belongs to the complex I subunit 4L family. In terms of assembly, NDH-1 is composed of 13 different subunits. Subunits NuoA, H, J, K, L, M, N constitute the membrane sector of the complex.

It localises to the cell inner membrane. The catalysed reaction is a quinone + NADH + 5 H(+)(in) = a quinol + NAD(+) + 4 H(+)(out). In terms of biological role, NDH-1 shuttles electrons from NADH, via FMN and iron-sulfur (Fe-S) centers, to quinones in the respiratory chain. The immediate electron acceptor for the enzyme in this species is believed to be ubiquinone. Couples the redox reaction to proton translocation (for every two electrons transferred, four hydrogen ions are translocated across the cytoplasmic membrane), and thus conserves the redox energy in a proton gradient. This Pseudomonas putida (strain W619) protein is NADH-quinone oxidoreductase subunit K.